A 346-amino-acid chain; its full sequence is Protein RecA (346 aa).

65–72 contributes to the ATP binding site; it reads GPESSGKT.

Belongs to the RecA family.

Its subcellular location is the cytoplasm. Its function is as follows. Can catalyze the hydrolysis of ATP in the presence of single-stranded DNA, the ATP-dependent uptake of single-stranded DNA by duplex DNA, and the ATP-dependent hybridization of homologous single-stranded DNAs. It interacts with LexA causing its activation and leading to its autocatalytic cleavage. The protein is Protein RecA of Enterococcus hirae (strain ATCC 9790 / DSM 20160 / JCM 8729 / LMG 6399 / NBRC 3181 / NCIMB 6459 / NCDO 1258 / NCTC 12367 / WDCM 00089 / R).